The sequence spans 357 residues: Putative F-box/kelch-repeat protein At5g38680 (357 aa).

One can recognise an F-box domain in the interval 14–61 (NSNPSLPDALIISCIARVSRLYYPILSFVSKSFRSLLASPELYKERSL). Kelch repeat units lie at residues 131–175 (NIYN…VLDG), 177–224 (IYVA…SKSL), 226–267 (IDEK…YCEI), and 268–313 (ENVL…GGKK).

The polypeptide is Putative F-box/kelch-repeat protein At5g38680 (Arabidopsis thaliana (Mouse-ear cress)).